The following is a 95-amino-acid chain: Aspartyl/glutamyl-tRNA(Asn/Gln) amidotransferase subunit C (95 aa).

This sequence belongs to the GatC family. As to quaternary structure, heterotrimer of A, B and C subunits.

It carries out the reaction L-glutamyl-tRNA(Gln) + L-glutamine + ATP + H2O = L-glutaminyl-tRNA(Gln) + L-glutamate + ADP + phosphate + H(+). The enzyme catalyses L-aspartyl-tRNA(Asn) + L-glutamine + ATP + H2O = L-asparaginyl-tRNA(Asn) + L-glutamate + ADP + phosphate + 2 H(+). Allows the formation of correctly charged Asn-tRNA(Asn) or Gln-tRNA(Gln) through the transamidation of misacylated Asp-tRNA(Asn) or Glu-tRNA(Gln) in organisms which lack either or both of asparaginyl-tRNA or glutaminyl-tRNA synthetases. The reaction takes place in the presence of glutamine and ATP through an activated phospho-Asp-tRNA(Asn) or phospho-Glu-tRNA(Gln). In Lysinibacillus sphaericus (strain C3-41), this protein is Aspartyl/glutamyl-tRNA(Asn/Gln) amidotransferase subunit C.